A 640-amino-acid chain; its full sequence is Chaperone protein DnaK (640 aa).

At Thr201 the chain carries Phosphothreonine; by autocatalysis. The disordered stretch occupies residues 600 to 640 (LYRAQQAAGAQTSDGASAQADSGGVREADYEVIDEDDKDKQ). The span at 607–619 (AGAQTSDGASAQA) shows a compositional bias: polar residues. Residues 629–640 (YEVIDEDDKDKQ) are compositionally biased toward acidic residues.

This sequence belongs to the heat shock protein 70 family.

Acts as a chaperone. The polypeptide is Chaperone protein DnaK (dnaK) (Rhodothermus marinus (Rhodothermus obamensis)).